Reading from the N-terminus, the 229-residue chain is Phosphoglycolate phosphatase (229 aa).

Asp13 functions as the Nucleophile in the catalytic mechanism. 3 residues coordinate Mg(2+): Asp13, Asp15, and Asp178.

The protein belongs to the HAD-like hydrolase superfamily. CbbY/CbbZ/Gph/YieH family. It depends on Mg(2+) as a cofactor.

It carries out the reaction 2-phosphoglycolate + H2O = glycolate + phosphate. It participates in organic acid metabolism; glycolate biosynthesis; glycolate from 2-phosphoglycolate: step 1/1. Functionally, specifically catalyzes the dephosphorylation of 2-phosphoglycolate. Is involved in the dissimilation of the intracellular 2-phosphoglycolate formed during the DNA repair of 3'-phosphoglycolate ends, a major class of DNA lesions induced by oxidative stress. In Photobacterium profundum (strain SS9), this protein is Phosphoglycolate phosphatase.